The following is a 199-amino-acid chain: Potassium-transporting ATPase KdpC subunit (199 aa).

The chain crosses the membrane as a helical span at residues 21–43 (LALLFVCGVVYTGTVTQLGGALF).

The protein belongs to the KdpC family. In terms of assembly, the system is composed of three essential subunits: KdpA, KdpB and KdpC.

The protein resides in the cell inner membrane. Part of the high-affinity ATP-driven potassium transport (or Kdp) system, which catalyzes the hydrolysis of ATP coupled with the electrogenic transport of potassium into the cytoplasm. This subunit acts as a catalytic chaperone that increases the ATP-binding affinity of the ATP-hydrolyzing subunit KdpB by the formation of a transient KdpB/KdpC/ATP ternary complex. The polypeptide is Potassium-transporting ATPase KdpC subunit (Shewanella putrefaciens (strain CN-32 / ATCC BAA-453)).